The chain runs to 520 residues: Cilia- and flagella-associated protein 157 (520 aa).

The tract at residues 1-22 is disordered; it reads MAPKKSVSKAGKELEVKKKGGK. Residues 10 to 22 are compositionally biased toward basic and acidic residues; sequence AGKELEVKKKGGK. Coiled coils occupy residues 33 to 189 and 236 to 372; these read LAKE…LEKK and LQMA…QATS. The disordered stretch occupies residues 416-453; it reads PQKAACPHQESQSHGPPKESRPSIQLPRTGSLLPQLSD. Residues 437–453 show a composition bias toward polar residues; it reads PSIQLPRTGSLLPQLSD.

It belongs to the CFAP157 family. As to quaternary structure, interacts with TUBB and TUBA4A. Interacts with CEP350.

Its subcellular location is the cytoplasm. The protein resides in the cytoskeleton. It localises to the cilium basal body. Its function is as follows. Specifically required during spermatogenesis for flagellum morphogenesis and sperm motility. May be required to suppress the formation of supernumerary axonemes and ensure a correct ultrastructure. This is Cilia- and flagella-associated protein 157 from Homo sapiens (Human).